The chain runs to 205 residues: Urease accessory protein UreG (205 aa).

10–17 (GPVGAGKT) is a GTP binding site.

The protein belongs to the SIMIBI class G3E GTPase family. UreG subfamily. As to quaternary structure, homodimer. UreD, UreF and UreG form a complex that acts as a GTP-hydrolysis-dependent molecular chaperone, activating the urease apoprotein by helping to assemble the nickel containing metallocenter of UreC. The UreE protein probably delivers the nickel.

The protein localises to the cytoplasm. Functionally, facilitates the functional incorporation of the urease nickel metallocenter. This process requires GTP hydrolysis, probably effectuated by UreG. This is Urease accessory protein UreG from Corynebacterium glutamicum (strain R).